The sequence spans 310 residues: 4-hydroxyproline epimerase (310 aa).

Cys88 serves as the catalytic Proton acceptor. Substrate-binding positions include 89-90, His208, and Asp232; that span reads GH. Cys236 (proton donor) is an active-site residue. 237–238 is a binding site for substrate; the sequence is GT.

This sequence belongs to the proline racemase family. Homodimer.

It carries out the reaction trans-4-hydroxy-L-proline = cis-4-hydroxy-D-proline. Functionally, allows intracellular utilization of 4-hydroxyproline, one of the major constituents of host collagen, by converting 4-hydroxy-L-proline to 4-hydroxy-D-proline, which can be further metabolized by intracellular 4-hydroxy-D-proline oxidases. In Burkholderia cenocepacia (strain HI2424), this protein is 4-hydroxyproline epimerase.